We begin with the raw amino-acid sequence, 250 residues long: MEWTDDAIVLSARPHGETAALAVLLTRGHGRHAGLVHGGQSGRMRPVLEPGNRVAARWAARLVEQLGTLALELERATAAGLLEDPLRLAALSSACALVDAALPEREPHPALFDATLALFDALQTEVWAEIYVRWEIGLLEEAGFGLDFGSCAATGITDNDQLAYVSPRTGRAVSLSAGEPYRDRLLALPPFLVGRSAGGAEEVVQGLALTGHFLDRHLFALRHAEVPAARTRFVDRYRKAHTTSGITPAP.

Belongs to the RecO family.

Functionally, involved in DNA repair and RecF pathway recombination. This chain is DNA repair protein RecO, found in Rhodospirillum centenum (strain ATCC 51521 / SW).